We begin with the raw amino-acid sequence, 481 residues long: Serralysin B (481 aa).

Residues 1–15 (MQQNEKASLNTSAAA) constitute a propeptide that is removed on maturation. A Zn(2+)-binding site is contributed by His189. Glu190 is a catalytic residue. His193 and Tyr230 together coordinate Zn(2+). Residues Arg267, Gly269, Thr271, Asp299, Gly301, Gly302, Asp304, Thr341, Glu343, Gly348, Gly350, Asp352, Asn357, Ala359, Asn361, Gly365, Gly366, Ala367, Gly368, Asp370, Gly374, Gly377, Asp379, Gly383, Gly384, Ala385, Gly386, Asp388, Asp397, Asp404, and Asp414 each coordinate Ca(2+). 3 Hemolysin-type calcium-binding repeats span residues 346 to 363 (IGGS…DNIL), 364 to 381 (QGGA…ADTL), and 382 to 399 (TGGA…QDST).

Belongs to the peptidase M10B family. Ca(2+) is required as a cofactor. The cofactor is Zn(2+).

It localises to the secreted. It carries out the reaction Preferential cleavage of bonds with hydrophobic residues in P1'.. This Dickeya chrysanthemi (Pectobacterium chrysanthemi) protein is Serralysin B (prtB).